A 227-amino-acid polypeptide reads, in one-letter code: Flagellar transcriptional regulator FtcR (227 aa).

The region spanning 1–116 (MIVVVDDRDM…EILARINAIR (116 aa)) is the Response regulatory domain. The segment at residues 127–226 (ADGTQLGPIR…KRFLGYCINI (100 aa)) is a DNA-binding region (ompR/PhoB-type).

Its function is as follows. Required for transcription of flagellar genes. The protein is Flagellar transcriptional regulator FtcR (ftcR) of Brucella abortus (strain 2308).